We begin with the raw amino-acid sequence, 716 residues long: ATP-dependent DNA helicase DinG (716 aa).

The Helicase ATP-binding domain occupies 17 to 294 (ALQEQIPDFI…TCMEQFRPKT (278 aa)). An ATP-binding site is contributed by 54-61 (APTGVGKT). C120 serves as a coordination point for [4Fe-4S] cluster. The short motif at 131 to 134 (EPTQ) is the DEAH box element. Residues C194, C199, and C205 each coordinate [4Fe-4S] cluster. The short motif at 248 to 251 (DEGH) is the DEAH box element. The region spanning 517–698 (HIAEMAAFFR…VFPIEQPEVP (182 aa)) is the Helicase C-terminal domain.

It belongs to the helicase family. DinG subfamily. Type 1 sub-subfamily. It depends on [4Fe-4S] cluster as a cofactor.

The enzyme catalyses Couples ATP hydrolysis with the unwinding of duplex DNA at the replication fork by translocating in the 5'-3' direction. This creates two antiparallel DNA single strands (ssDNA). The leading ssDNA polymer is the template for DNA polymerase III holoenzyme which synthesizes a continuous strand.. It catalyses the reaction ATP + H2O = ADP + phosphate + H(+). DNA-dependent ATPase and 5'-3' DNA helicase. Unwinds D-loops, R-loops, forked DNA and G-quadruplex DNA. In Escherichia coli O157:H7, this protein is ATP-dependent DNA helicase DinG.